A 103-amino-acid chain; its full sequence is NADH-quinone oxidoreductase subunit K (103 aa).

A run of 3 helical transmembrane segments spans residues 7–27 (TEHG…GVLV), 31–51 (LIFM…AFIV), and 65–85 (FMLI…LILL).

It belongs to the complex I subunit 4L family. NDH-1 is composed of 14 different subunits. Subunits NuoA, H, J, K, L, M, N constitute the membrane sector of the complex.

It is found in the cell inner membrane. The catalysed reaction is a quinone + NADH + 5 H(+)(in) = a quinol + NAD(+) + 4 H(+)(out). NDH-1 shuttles electrons from NADH, via FMN and iron-sulfur (Fe-S) centers, to quinones in the respiratory chain. The immediate electron acceptor for the enzyme in this species is believed to be ubiquinone. Couples the redox reaction to proton translocation (for every two electrons transferred, four hydrogen ions are translocated across the cytoplasmic membrane), and thus conserves the redox energy in a proton gradient. This chain is NADH-quinone oxidoreductase subunit K, found in Nitrosococcus oceani (strain ATCC 19707 / BCRC 17464 / JCM 30415 / NCIMB 11848 / C-107).